A 288-amino-acid polypeptide reads, in one-letter code: ATP synthase gamma chain (288 aa).

It belongs to the ATPase gamma chain family. F-type ATPases have 2 components, CF(1) - the catalytic core - and CF(0) - the membrane proton channel. CF(1) has five subunits: alpha(3), beta(3), gamma(1), delta(1), epsilon(1). CF(0) has three main subunits: a, b and c.

The protein resides in the cell membrane. Functionally, produces ATP from ADP in the presence of a proton gradient across the membrane. The gamma chain is believed to be important in regulating ATPase activity and the flow of protons through the CF(0) complex. The chain is ATP synthase gamma chain from Symbiobacterium thermophilum (strain DSM 24528 / JCM 14929 / IAM 14863 / T).